Reading from the N-terminus, the 100-residue chain is Replication restart protein PriB (100 aa).

The SSB domain occupies 1–100 (MTNRMELSGT…VLHADNITQI (100 aa)).

It belongs to the PriB family. In terms of assembly, homodimer. Interacts with PriA and DnaT. Component of the replication restart primosome. Primosome assembly occurs via a 'hand-off' mechanism. PriA binds to replication forks, subsequently PriB then DnaT bind; DnaT then displaces ssDNA to generate the helicase loading substrate.

Involved in the restart of stalled replication forks, which reloads the replicative helicase on sites other than the origin of replication; the PriA-PriB pathway is the major replication restart pathway. During primosome assembly it facilitates complex formation between PriA and DnaT on DNA; stabilizes PriA on DNA. Stimulates the DNA unwinding activity of PriA helicase. This is Replication restart protein PriB from Vibrio parahaemolyticus serotype O3:K6 (strain RIMD 2210633).